Consider the following 257-residue polypeptide: Pantothenate synthetase (257 aa).

Residue 29–36 (MGNLHAGH) participates in ATP binding. Residue His-36 is the Proton donor of the active site. Gln-60 provides a ligand contact to (R)-pantoate. Position 60 (Gln-60) interacts with beta-alanine. ATP is bound at residue 145 to 148 (GEKD). Position 151 (Gln-151) interacts with (R)-pantoate. ATP contacts are provided by residues Val-174 and 182-185 (LSSR).

This sequence belongs to the pantothenate synthetase family. Homodimer.

Its subcellular location is the cytoplasm. The enzyme catalyses (R)-pantoate + beta-alanine + ATP = (R)-pantothenate + AMP + diphosphate + H(+). It functions in the pathway cofactor biosynthesis; (R)-pantothenate biosynthesis; (R)-pantothenate from (R)-pantoate and beta-alanine: step 1/1. Catalyzes the condensation of pantoate with beta-alanine in an ATP-dependent reaction via a pantoyl-adenylate intermediate. This Coxiella burnetii (strain Dugway 5J108-111) protein is Pantothenate synthetase.